We begin with the raw amino-acid sequence, 1385 residues long: Pesticidal crystal protein Cry5Aa (1385 aa).

Disordered regions lie at residues 768–799 and 1359–1385; these read NITVQSNNPPQPSNNGGGDGGGNGGGDGGQYN and PLPTDDQNSEGNTASSTNSDTSMNNNQ. A compositionally biased stretch (gly residues) spans 782-796; the sequence is NGGGDGGGNGGGDGG. Positions 1370-1385 are enriched in low complexity; sequence NTASSTNSDTSMNNNQ.

It belongs to the delta endotoxin family.

In terms of biological role, endotoxin with nematicidal activity. This chain is Pesticidal crystal protein Cry5Aa (cry5Aa), found in Bacillus thuringiensis subsp. darmstadiensis.